The chain runs to 129 residues: Small ribosomal subunit protein uS11 (129 aa).

The protein belongs to the universal ribosomal protein uS11 family. In terms of assembly, part of the 30S ribosomal subunit. Interacts with proteins S7 and S18. Binds to IF-3.

Its function is as follows. Located on the platform of the 30S subunit, it bridges several disparate RNA helices of the 16S rRNA. Forms part of the Shine-Dalgarno cleft in the 70S ribosome. In Desulfovibrio desulfuricans (strain ATCC 27774 / DSM 6949 / MB), this protein is Small ribosomal subunit protein uS11.